We begin with the raw amino-acid sequence, 92 residues long: Protein 10 (92 aa).

In terms of domain architecture, EF-hand spans Phe18–His29.

Belongs to the calbindin family. In terms of tissue distribution, brain.

The polypeptide is Protein 10 (Cavia porcellus (Guinea pig)).